We begin with the raw amino-acid sequence, 556 residues long: Carotenoid-cleaving dioxygenase, mitochondrial (556 aa).

Fe cation contacts are provided by His-203, His-263, His-334, and His-550.

It belongs to the carotenoid oxygenase family. Fe(2+) is required as a cofactor.

The protein resides in the mitochondrion. It carries out the reaction all-trans-beta-carotene + O2 = beta-ionone + all-trans-10'-apo-beta-carotenal. The catalysed reaction is 5-cis-lycopene + O2 = 5-cis-10'-apo-lycopenal + (3E,5E)-6,10-dimethylundeca-3,5,9-trien-2-one. The enzyme catalyses 13-cis-lycopene + O2 = 13-cis-10'-apo-lycopenal + (3E,5E)-6,10-dimethylundeca-3,5,9-trien-2-one. It catalyses the reaction lutein + O2 = (3R,6R)-hydroxy-alpha-ionone + (3R)-3-hydroxy-10'-apo-beta-carotenal. It carries out the reaction lutein + O2 = (3R,6R)-3-hydroxy-10'-apo-alpha-carotenal + (3R)-hydroxy-beta-ionone. The catalysed reaction is all-trans-zeaxanthin + 2 O2 = 4,9-dimethyldodeca-2,4,6,8,10-pentaenedial + 2 (3R)-hydroxy-beta-ionone. The enzyme catalyses all-trans-zeaxanthin + O2 = (3R)-3-hydroxy-10'-apo-beta-carotenal + (3R)-hydroxy-beta-ionone. It catalyses the reaction beta-cryptoxanthin + O2 = all-trans-10'-apo-beta-carotenal + (3R)-hydroxy-beta-ionone. It carries out the reaction all-trans-10'-apo-beta-carotenal + O2 = beta-ionone + 4,9-dimethyldodeca-2,4,6,8,10-pentaenedial. The catalysed reaction is (3R)-3-hydroxy-10'-apo-beta-carotenal + O2 = 4,9-dimethyldodeca-2,4,6,8,10-pentaenedial + (3R)-hydroxy-beta-ionone. The enzyme catalyses (3R,6R)-3-hydroxy-10'-apo-alpha-carotenal + O2 = (3R,6R)-hydroxy-alpha-ionone + 4,9-dimethyldodeca-2,4,6,8,10-pentaenedial. Broad specificity mitochondrial dioxygenase that mediates the asymmetric oxidative cleavage of carotenoids. Cleaves carotenes (pure hydrocarbon carotenoids) such as all-trans-beta-carotene and lycopene as well as xanthophylls (oxygenated carotenoids) such as zeaxanthin, lutein and beta-cryptoxanthin at both the 9,10 and the 9',10' carbon-carbon double bond. Through its function in carotenoids metabolism regulates oxidative stress and the production of important signaling molecules. The chain is Carotenoid-cleaving dioxygenase, mitochondrial from Macaca fascicularis (Crab-eating macaque).